A 450-amino-acid chain; its full sequence is TNF receptor-associated factor family protein DDB_G0273433/DDB_G0273509 (450 aa).

The RING-type; degenerate zinc-finger motif lies at 26–73 (CQICFNSVIDFKKETLSFDVLQCRNGHISCHECWNRQLSIKQECPSCK). 2 TRAF-type zinc fingers span residues 129-185 (HHLK…KKLN) and 186-243 (KHIE…SQLS). The stretch at 257 to 297 (QNVMDLHKLQLDECNQDYRKLEKQNRDLEKRLFYLESTVNS) forms a coiled coil. One can recognise an MATH domain in the interval 319–439 (VYKGKWVINN…NNSLTISISI (121 aa)).

It belongs to the TNF receptor-associated factor family. A subfamily.

Its subcellular location is the cytoplasm. Its function is as follows. Probable adapter protein and signal transducer that links members of the tumor necrosis factor receptor family to different signaling pathways by association with the receptor cytoplasmic domain and kinases. The chain is TNF receptor-associated factor family protein DDB_G0273433/DDB_G0273509 from Dictyostelium discoideum (Social amoeba).